A 389-amino-acid chain; its full sequence is Chalcone synthase 3 (389 aa).

The active site involves Cys-164.

Belongs to the thiolase-like superfamily. Chalcone/stilbene synthases family.

The catalysed reaction is (E)-4-coumaroyl-CoA + 3 malonyl-CoA + 3 H(+) = 2',4,4',6'-tetrahydroxychalcone + 3 CO2 + 4 CoA. It participates in secondary metabolite biosynthesis; flavonoid biosynthesis. In terms of biological role, the primary product of this enzyme is 4,2',4',6'-tetrahydroxychalcone (also termed naringenin-chalcone or chalcone) which can under specific conditions spontaneously isomerize into naringenin. The protein is Chalcone synthase 3 (CHS3) of Camellia sinensis (Tea plant).